We begin with the raw amino-acid sequence, 227 residues long: Glial cell line-derived neurotrophic factor (227 aa).

The first 19 residues, 1–19 (MKLWAILAVCILLLSSVSS), serve as a signal peptide directing secretion. The propeptide occupies 20–93 (IPLPSNWLAG…EFIQDTIKRL (74 aa)). 2 disordered regions span residues 32–61 (RSHLPDPQEGEDQVFGMDGAVPEDPTANMA) and 93–113 (LKRSSNKQPPSRRDRGRQSLA). Cystine bridges form between Cys134-Cys195, Cys161-Cys224, and Cys165-Cys226. 2 N-linked (GlcNAc...) asparagine glycosylation sites follow: Asn142 and Asn178.

It belongs to the TGF-beta family. GDNF subfamily. As to quaternary structure, homodimer; disulfide-linked. Interacts with GFRA1 coreceptor and RET: forms a 2:2:2 ternary complex composed of GDNF ligand, GFRA1 and RET receptor. As to expression, from stage 22, expressed in somites and the pronephros. At stage 24 and 26, expressed in the pharyngeal arches I-III. At stage 31, expression in the eye, central nervous system and pharyngeal arches IV and V increases. Up to stage 34, expression becomes intense at the oral cavity and lateral line structures. At this stage, expression weakens in the pharyngeal arches, and increases in the epibranchial arches. Expressed in the digestive tract in stage 34 embryos.

It is found in the secreted. Functionally, neurotrophic factor that enhances survival and morphological differentiation of dopaminergic neurons and increases their high-affinity dopamine uptake. Acts by binding to its coreceptor, GFRA1, leading to autophosphorylation and activation of the RET receptor. The protein is Glial cell line-derived neurotrophic factor of Xenopus laevis (African clawed frog).